The following is a 314-amino-acid chain: MPFSEPGKTKFQVDLRRHLRNQGICDNLVHLICEIAEASKYVINAVRTGDLGVAGTSNLYGEEQLALDVLSDRIIKKRLIHSGVVCNIASEEMDEIFQAQADADGLYSVAYDPLDGSSLVDVNLAVGTIVSIYEGCNLLQKGRNQVAALYILYGPRVSMVYSVGRGVHEFTMNHLMEFTLSRENIVMQEEGNIYAPGGLRNKYQEGTEQFVRYLEEKGAKLRYSGGFVPDINQVIMKGKGIFMYPALNGSPNGKLRLLFELNAMAYLVENAGGAATDGKQPILDLEPHSLDQRAPVYIGCKADVVKAMEFVSRN.

Residues glutamate 91, aspartate 112, leucine 114, and aspartate 115 each coordinate Mg(2+). Substrate is bound by residues 115 to 118 (DGSS), tyrosine 223, and lysine 254. Glutamate 260 provides a ligand contact to Mg(2+).

The protein belongs to the FBPase class 1 family. In terms of assembly, homotetramer. Requires Mg(2+) as cofactor.

The protein localises to the cytoplasm. It carries out the reaction beta-D-fructose 1,6-bisphosphate + H2O = beta-D-fructose 6-phosphate + phosphate. The protein operates within carbohydrate biosynthesis; gluconeogenesis. The sequence is that of Fructose-1,6-bisphosphatase class 1 from Geobacter metallireducens (strain ATCC 53774 / DSM 7210 / GS-15).